We begin with the raw amino-acid sequence, 241 residues long: Terpene cyclase pyr4 (241 aa).

7 consecutive transmembrane segments (helical) span residues 20–40 (IADWALLAQGLGWSINYLAMI), 49–69 (YGMAILPLCCNFAWEFVYSVI), 79–99 (AVLTTWMILNLFVMYTAIKFA), 113–133 (LPWIFPVAIAAFTAGHLALAA), 141–161 (ANWGAFLCFELLTSGAVCQLM), 168–188 (GASYTIWLSRFLGSYIGGIFL), and 206–226 (FVTWHGLMCFSLDIAYVTFLW).

The protein belongs to the paxB family.

The protein localises to the membrane. It catalyses the reaction 2-oxo-3-[(8S)-epoxy-(2E,6E)-farnesyl]-6-(pyridin-3-yl)-2H-pyran-4-olate + H(+) = deacetylpyripyropene E. It functions in the pathway secondary metabolite biosynthesis; terpenoid biosynthesis. In terms of biological role, terpene cyclase; part of the gene cluster that mediates the biosynthesis of pyripyropene A, a specific human acyl-coenzyme A:cholesterol acyltransferase 2 inhibitor. The first step of the pathway is the synthesis of nicotinyl-CoA from nicotinic acid by the nicotinic acid-CoA ligase pyr1. Nicotinyl-CoA is then a substrate of polyketide synthase pyr2 to produce 4-hydroxy-6-(3-pyridinyl)-2H-pyran-2-one (HPPO) which is further prenylated by the polyprenyl transferase pyr6 to yield farnesyl-HPPO. The next steps consist of an epoxidation of farnesyl-HPPO to epoxyfarnesyl-HPPO by FAD-dependent monooxygenase pyr5 and a cyclization of the terpenoid portion by the terpene cyclase pyr4 to yield deacetyl-pyripyropene E. The 2 cytochrome P450 monooxygenases pyr3 and pyr9, and the 2 acetyltransferases pyr7 and pyr8 are involved in the conversion of deacetyl-pyripyropene E into pyripyropene A through several cycles of oxidation and acetylation steps. Pyr7 acetylates deacetyl-pyripyropene E to pyripyropene E which is oxidized to 11-deacetyl-pyripyropene O by pyr3, which is in turn acetylated into pyripyropene O by pyr8. Pyripyropene O is then oxidized to deacetyl-pyripyropene A by pyr9. Deacetyl-pyripyropene A is finally acetylated to pyripyropene A by pyr8. This chain is Terpene cyclase pyr4, found in Aspergillus fumigatus (strain ATCC MYA-4609 / CBS 101355 / FGSC A1100 / Af293) (Neosartorya fumigata).